We begin with the raw amino-acid sequence, 359 residues long: GATA-binding factor 1-A (359 aa).

Residues 1–21 are disordered; sequence MDYTTLTTQDPDPNYTESGLA. 2 consecutive GATA-type zinc fingers follow at residues 178 to 202 and 232 to 256; these read CVNCGATVTPLWRRDMSGHYLCNAC and CSNCHTSTTTLWRRNASGDPVCNAC. 2 disordered regions span residues 271–311 and 323–359; these read MKKE…SPYP and PMGHMINPPHHFLQSPRISHSAPAVSYRQAASGVTPP. A compositionally biased stretch (basic residues) spans 279–291; sequence RNRKVSSRSKKKK.

Expressed in the developing ventral blood island, and in both tadpole and adult erythrocytes.

It is found in the nucleus. In terms of biological role, transcription factor that acts synergistically with tal1/scl and lmo2 to specify embryonic dorsal mesoderm to a hematopoietic fate. The polypeptide is GATA-binding factor 1-A (gata1-a) (Xenopus laevis (African clawed frog)).